Here is a 26-residue protein sequence, read N- to C-terminus: KIKWFKTMKSLAKFLAKEQMKKHLGE.

Expressed by the venom gland.

It localises to the secreted. The protein resides in the target cell membrane. Forms pore that permeabilize the cell membrane. Promotes efflux of calcium from synaptosomes, causes hemolysis, and dissipates voltage gradients across muscle membrane. Potently inhibits the growth of bacteria and yeast. May function both in the prey capture strategy as well as protection from infectious organisms arising from prey ingestion. In Lycosa singoriensis (Wolf spider), this protein is M-lycotoxin-Ls2a.